A 390-amino-acid polypeptide reads, in one-letter code: Magnesium-protoporphyrin IX monomethyl ester [oxidative] cyclase (390 aa).

This sequence belongs to the AcsF family. Fe cation is required as a cofactor.

The enzyme catalyses Mg-protoporphyrin IX 13-monomethyl ester + 3 NADPH + 3 O2 + 2 H(+) = 3,8-divinyl protochlorophyllide a + 3 NADP(+) + 5 H2O. Its pathway is porphyrin-containing compound metabolism; chlorophyll biosynthesis (light-independent). Catalyzes the formation of the isocyclic ring in chlorophyll biosynthesis. Mediates the cyclase reaction, which results in the formation of divinylprotochlorophyllide (Pchlide) characteristic of all chlorophylls from magnesium-protoporphyrin IX 13-monomethyl ester (MgPMME). The sequence is that of Magnesium-protoporphyrin IX monomethyl ester [oxidative] cyclase from Prochlorococcus marinus (strain AS9601).